The following is a 304-amino-acid chain: MPLFDLISPKAFVKLVASEKVHRIVPVDATWYLPSWKLDNKVDFLTKPRIPNSIFFDIDAISDKKSPYPHMFPTKKVFDDAMSNLGVQKDDILVVYDRVGNFSSPRCAWTLGVMGHPKVYLLNNFNQYREFKYPLDSSKVAAFSPYPKSHYESSESFQDKEIVDYEEMFQLVKSGELAKKFNAFDARSLGRFEGTEPEPRSDIPSGHIPGTQPLPYGSLLDPETKTYPEAGEAIHATLEKALKDFHCTLDPSKPTICSCGTGVSGVIIKTALELAGVPNVRLYDGSWTEWVLKSGPEWIAENRD.

2 consecutive Rhodanese domains span residues 20-137 (KVHR…PLDS) and 177-299 (LAKK…PEWI). Basic and acidic residues predominate over residues 191–201 (RFEGTEPEPRS). A disordered region spans residues 191 to 222 (RFEGTEPEPRSDIPSGHIPGTQPLPYGSLLDP). Residue S201 is modified to Phosphoserine. Catalysis depends on C259, which acts as the Cysteine persulfide intermediate. The residue at position 264 (S264) is a Phosphoserine.

The protein resides in the mitochondrion. It localises to the cytoplasm. The catalysed reaction is thiosulfate + hydrogen cyanide = thiocyanate + sulfite + 2 H(+). Functionally, sulfur transferase that accepts persulfite from NFS1 and transfers it to UBA4 in the pathway for 2-thiolation of the wobble uridine base of tRNAs. Stimulates sulfur transfer by NFS1. Involved in metabolism of sterol esters in a tRNA thiolation pathway-independent manner. The polypeptide is Thiosulfate sulfurtransferase TUM1 (Saccharomyces cerevisiae (strain ATCC 204508 / S288c) (Baker's yeast)).